A 570-amino-acid polypeptide reads, in one-letter code: Sulfite reductase [NADPH] hemoprotein beta-component (570 aa).

Positions 434, 440, 479, and 483 each coordinate [4Fe-4S] cluster. Cys483 is a binding site for siroheme.

It belongs to the nitrite and sulfite reductase 4Fe-4S domain family. Alpha(8)-beta(8). The alpha component is a flavoprotein, the beta component is a hemoprotein. Siroheme is required as a cofactor. The cofactor is [4Fe-4S] cluster.

The catalysed reaction is hydrogen sulfide + 3 NADP(+) + 3 H2O = sulfite + 3 NADPH + 4 H(+). It functions in the pathway sulfur metabolism; hydrogen sulfide biosynthesis; hydrogen sulfide from sulfite (NADPH route): step 1/1. Component of the sulfite reductase complex that catalyzes the 6-electron reduction of sulfite to sulfide. This is one of several activities required for the biosynthesis of L-cysteine from sulfate. This chain is Sulfite reductase [NADPH] hemoprotein beta-component, found in Escherichia coli (strain B / BL21-DE3).